A 495-amino-acid polypeptide reads, in one-letter code: Formin-like protein 17 (495 aa).

The tract at residues 1–92 (MDIRELIDIT…HNLKGQGQTR (92 aa)) is disordered. Pro residues predominate over residues 19–29 (GPPPPPPPPLL). Low complexity predominate over residues 30–39 (QPHHSALSSS). Residues 86–486 (KGQGQTRKAN…RAQKEAENEK (401 aa)) enclose the FH2 domain.

The protein belongs to the formin-like family. Class-II subfamily.

In Arabidopsis thaliana (Mouse-ear cress), this protein is Formin-like protein 17 (FH17).